A 59-amino-acid polypeptide reads, in one-letter code: Large ribosomal subunit protein bL32 (59 aa).

The disordered stretch occupies residues 1-59 (MAVQQNRKTPSKRGMRRSHDSLSKPTLSTEQNTGETHRRHHISADGYYRGRKVTRGQDD). A compositionally biased stretch (polar residues) spans 23–34 (SKPTLSTEQNTG). Over residues 49–59 (RGRKVTRGQDD) the composition is skewed to basic residues.

The protein belongs to the bacterial ribosomal protein bL32 family.

The sequence is that of Large ribosomal subunit protein bL32 from Halorhodospira halophila (strain DSM 244 / SL1) (Ectothiorhodospira halophila (strain DSM 244 / SL1)).